We begin with the raw amino-acid sequence, 147 residues long: MDHRAAFGYFSNACFKVMLFSSLLASFASSVAFISLITFSLSSSESPNWAELVVNSKWSSSKALSFFPSSKSSVLKTSCWFTISLEDSEMFLSSFFEAAFFLLTNEMIFFILYYFFSCLMFFYVASERNTNPKILQTINTKPLYIKN.

Residues 1 to 16 are Extracellular-facing; it reads MDHRAAFGYFSNACFK. Residues 17–37 form a helical membrane-spanning segment; that stretch reads VMLFSSLLASFASSVAFISLI. Over 38-105 the chain is Cytoplasmic; it reads TFSLSSSESP…FEAAFFLLTN (68 aa). The helical transmembrane segment at 106 to 126 threads the bilayer; sequence EMIFFILYYFFSCLMFFYVAS. The Extracellular portion of the chain corresponds to 127 to 147; it reads ERNTNPKILQTINTKPLYIKN.

It is found in the membrane. This is an uncharacterized protein from Saccharomyces cerevisiae (strain ATCC 204508 / S288c) (Baker's yeast).